A 380-amino-acid polypeptide reads, in one-letter code: Cytochrome b (380 aa).

4 helical membrane passes run 33-53 (FGSL…FLAM), 77-98 (WLIR…YMHI), 113-133 (WNIG…GYVL), and 178-198 (FFAF…LHLL). H83 and H97 together coordinate heme b. Heme b is bound by residues H182 and H196. H201 is a binding site for a ubiquinone. Transmembrane regions (helical) follow at residues 226–246 (YKDL…ALFA), 288–308 (LGGV…PFLH), 320–340 (LTQM…WIGG), and 347–367 (FIII…VLFP).

Belongs to the cytochrome b family. As to quaternary structure, the cytochrome bc1 complex contains 3 respiratory subunits (MT-CYB, CYC1 and UQCRFS1), 2 core proteins (UQCRC1 and UQCRC2) and probably 6 low-molecular weight proteins. Heme b is required as a cofactor.

Its subcellular location is the mitochondrion inner membrane. Its function is as follows. Component of the ubiquinol-cytochrome c reductase complex (complex III or cytochrome b-c1 complex) that is part of the mitochondrial respiratory chain. The b-c1 complex mediates electron transfer from ubiquinol to cytochrome c. Contributes to the generation of a proton gradient across the mitochondrial membrane that is then used for ATP synthesis. The protein is Cytochrome b (mt-cyb) of Gadus morhua (Atlantic cod).